Here is a 428-residue protein sequence, read N- to C-terminus: UPF0761 membrane protein TERTU_3006 (428 aa).

A run of 7 helical transmembrane segments spans residues 47-67 (LFAL…IPAF), 104-124 (LSGV…RNIE), 143-163 (YLLY…AFLL), 189-209 (VVPW…VPNC), 218-238 (IGGV…GYIV), 248-268 (GAFA…TIIL), and 292-312 (MIVV…GESV).

This sequence belongs to the UPF0761 family.

It localises to the cell inner membrane. In Teredinibacter turnerae (strain ATCC 39867 / T7901), this protein is UPF0761 membrane protein TERTU_3006.